The primary structure comprises 156 residues: CD-NTase-associated protein 8 (156 aa).

It belongs to the bacterial HORMA family. HORMA3 subfamily. As to quaternary structure, interacts with Cap7 (also called HORMA2) and CdnC; forms CdnD:Cap7:Cap8 (also called CdnD:HORMA2:HORMA3) complexes with stoichiometries of 1:1:1 and 2:1:1.

Functionally, CBASS (cyclic oligonucleotide-based antiphage signaling system) provides immunity against bacteriophage. The CD-NTase protein synthesizes cyclic nucleotides in response to infection; these serve as specific second messenger signals. The signals activate a diverse range of effectors, leading to bacterial cell death and thus abortive phage infection. A type III-C(AAA) CBASS system. Its function is as follows. A member of the CBASS system in this bacteria. It does not seem to bind a closure peptide, its exact function is unknown. The chain is CD-NTase-associated protein 8 from Pseudomonas aeruginosa.